A 76-amino-acid polypeptide reads, in one-letter code: High-potential iron-sulfur protein isozyme 2 (76 aa).

Cysteine 38, cysteine 41, cysteine 54, and cysteine 70 together coordinate [4Fe-4S] cluster.

It belongs to the high-potential iron-sulfur protein (HiPIP) family. As to quaternary structure, homodimer.

In terms of biological role, specific class of high-redox-potential 4Fe-4S ferredoxins. Functions in anaerobic electron transport in most purple and in some other photosynthetic bacteria and in at least one genus (Paracoccus) of halophilic, denitrifying bacteria. This is High-potential iron-sulfur protein isozyme 2 (hip2) from Halorhodospira halophila (Ectothiorhodospira halophila).